The following is a 173-amino-acid chain: Gamma-crystallin S-2 (173 aa).

Beta/gamma crystallin 'Greek key' domains are found at residues 2–40 (GKII…RVES) and 41–83 (DWWV…RVPT). The connecting peptide stretch occupies residues 84 to 88 (HTQRP). 2 Beta/gamma crystallin 'Greek key' domains span residues 89–129 (YRMR…HVMG) and 130–172 (AYWI…RRIM).

The protein belongs to the beta/gamma-crystallin family.

In terms of biological role, crystallins are the dominant structural components of the vertebrate eye lens. This Chiloscyllium indicum (Slender bamboo shark) protein is Gamma-crystallin S-2 (GS-2).